Here is a 1101-residue protein sequence, read N- to C-terminus: Translation initiation factor IF-2 (1101 aa).

Disordered stretches follow at residues 81 to 437 (QEIL…EDDF) and 452 to 509 (SIST…QRAE). The span at 93 to 108 (PFSSTDAPVGSGQSSP) shows a compositional bias: polar residues. The span at 110 to 124 (IEPPRPPMKPQPPSP) shows a compositional bias: pro residues. Polar residues-rich tracts occupy residues 128–149 (EVTS…GSSS) and 157–184 (SPMS…QLKY). Positions 185–196 (NQEQSNQLEQES) are enriched in low complexity. The segment covering 197–206 (AISSELSEVN) has biased composition (polar residues). Basic and acidic residues-rich tracts occupy residues 228–237 (SKEKEAKSNE), 248–288 (KENK…DKKS), and 295–340 (VKRE…ELKR). Acidic residues predominate over residues 361 to 378 (EPEDVEDTAEDLLEEDPL). Composition is skewed to basic residues over residues 385-397 (PKLK…KVGK) and 414-428 (KAGK…KRRQ). Residues 484-506 (EPGRGKSAERERSERKDRKEQPQ) show a composition bias toward basic and acidic residues. The tr-type G domain occupies 592-765 (RRPPVVTIMG…LLVAEVGELS (174 aa)). Residues 601-608 (GHVDHGKT) form a G1 region. 601 to 608 (GHVDHGKT) contributes to the GTP binding site. The segment at 626-630 (GITQH) is G2. A G3 region spans residues 651–654 (DTPG). Residues 651–655 (DTPGH) and 705–708 (NKID) each bind GTP. Positions 705-708 (NKID) are G4. Positions 741 to 743 (SAL) are G5.

Belongs to the TRAFAC class translation factor GTPase superfamily. Classic translation factor GTPase family. IF-2 subfamily.

Its subcellular location is the cytoplasm. Functionally, one of the essential components for the initiation of protein synthesis. Protects formylmethionyl-tRNA from spontaneous hydrolysis and promotes its binding to the 30S ribosomal subunits. Also involved in the hydrolysis of GTP during the formation of the 70S ribosomal complex. The chain is Translation initiation factor IF-2 from Gloeothece citriformis (strain PCC 7424) (Cyanothece sp. (strain PCC 7424)).